We begin with the raw amino-acid sequence, 137 residues long: Putative pre-16S rRNA nuclease (137 aa).

Belongs to the YqgF nuclease family.

The protein resides in the cytoplasm. In terms of biological role, could be a nuclease involved in processing of the 5'-end of pre-16S rRNA. The sequence is that of Putative pre-16S rRNA nuclease from Clostridium botulinum (strain Eklund 17B / Type B).